The chain runs to 95 residues: Protein ECS1 (95 aa).

The first 27 residues, 1–27, serve as a signal peptide directing secretion; that stretch reads MASSIVSSMFLFLLLLLVFPHIDNVLG.

Expressed in leaves, flowers and stems, but not in roots.

It localises to the secreted. It is found in the cell wall. Its function is as follows. Maybe involved in defense responses to X.campestris, but probably not a X.campestris pv. campestris race 750 (e.g. Xcc750) resistance gene; according to genetic data, linked to a locus influencing resistance to Xcc750. The protein is Protein ECS1 of Arabidopsis thaliana (Mouse-ear cress).